We begin with the raw amino-acid sequence, 783 residues long: Cation/H(+) antiporter 10 (783 aa).

Transmembrane regions (helical) follow at residues 31–51 (VVFG…FFCI), 61–81 (IGIS…PQLF), 100–120 (IAAL…LMTV), 135–155 (VVIG…QNFF), 175–195 (AIVI…LLEL), 206–226 (ALSA…VASI), 244–264 (AVII…QWVI), 276–295 (MYIH…FVFF), 300–322 (ILGP…ALEA), 356–376 (IFFN…ACLA), 389–409 (LAVS…YEAV), and 418–438 (ATYS…PTVL).

The protein belongs to the monovalent cation:proton antiporter 2 (CPA2) transporter (TC 2.A.37) family. CHX (TC 2.A.37.4) subfamily. Specifically expressed in pollen.

The protein resides in the membrane. Functionally, may operate as a cation/H(+) antiporter. The protein is Cation/H(+) antiporter 10 (CHX10) of Arabidopsis thaliana (Mouse-ear cress).